A 366-amino-acid polypeptide reads, in one-letter code: Ribosomal RNA large subunit methyltransferase M (366 aa).

S-adenosyl-L-methionine is bound by residues serine 188, 221-224 (CPGG), aspartate 240, aspartate 260, and aspartate 277. Lysine 306 (proton acceptor) is an active-site residue.

Belongs to the class I-like SAM-binding methyltransferase superfamily. RNA methyltransferase RlmE family. RlmM subfamily. In terms of assembly, monomer.

Its subcellular location is the cytoplasm. It catalyses the reaction cytidine(2498) in 23S rRNA + S-adenosyl-L-methionine = 2'-O-methylcytidine(2498) in 23S rRNA + S-adenosyl-L-homocysteine + H(+). Catalyzes the 2'-O-methylation at nucleotide C2498 in 23S rRNA. The chain is Ribosomal RNA large subunit methyltransferase M from Shigella flexneri serotype 5b (strain 8401).